The sequence spans 295 residues: Methionine aminopeptidase (295 aa).

Histidine 62 contributes to the substrate binding site. A divalent metal cation-binding residues include aspartate 82, aspartate 93, and histidine 153. Substrate is bound at residue histidine 161. 2 residues coordinate a divalent metal cation: glutamate 187 and glutamate 280.

It belongs to the peptidase M24A family. Methionine aminopeptidase archaeal type 2 subfamily. In terms of assembly, monomer. Co(2+) serves as cofactor. Zn(2+) is required as a cofactor. It depends on Mn(2+) as a cofactor. Requires Fe(2+) as cofactor.

The catalysed reaction is Release of N-terminal amino acids, preferentially methionine, from peptides and arylamides.. Its function is as follows. Removes the N-terminal methionine from nascent proteins. The N-terminal methionine is often cleaved when the second residue in the primary sequence is small and uncharged (Met-Ala-, Cys, Gly, Pro, Ser, Thr, or Val). The protein is Methionine aminopeptidase of Pyrococcus abyssi (strain GE5 / Orsay).